The sequence spans 409 residues: O-glucosyltransferase rumi (409 aa).

Positions 1 to 20 (MLINVVLIILLVGLNGKASG) are cleaved as a signal peptide. 4 disulfides stabilise this stretch: Cys-62–Cys-73, Cys-71–Cys-376, Cys-118–Cys-124, and Cys-280–Cys-303. Asp-149 functions as the Proton donor/acceptor in the catalytic mechanism. The interaction with the consensus sequence C-X-S-X-[PA]-C in peptide substrates stretch occupies residues 190–195 (ATKLHP). Residues 227–231 (RGSRT), Arg-235, 274–276 (VSF), and 292–296 (AASFR) each bind UDP-alpha-D-glucose. Positions 406-409 (KDEL) match the Prevents secretion from ER motif.

This sequence belongs to the glycosyltransferase 90 family.

It localises to the endoplasmic reticulum lumen. It participates in protein modification; protein glycosylation. Functionally, protein O-glucosyltransferase. Catalyzes the reaction that attaches glucose through an O-glycosidic linkage to a conserved serine residue found in the consensus sequence C-X-S-X-[PA]-C in epidermal growth factor-like repeats. Regulates Notch signaling by glucosylating Notch in the ER, glucosylation is required for the correct folding and cleavage of Notch. This Drosophila pseudoobscura pseudoobscura (Fruit fly) protein is O-glucosyltransferase rumi.